A 100-amino-acid chain; its full sequence is Secreted protein of Ly-6 domain 1 (100 aa).

The first 22 residues, 1–22 (MAKCLLLLLLVVLSSLLGLPQA), serve as a signal peptide directing secretion. One can recognise a UPAR/Ly6 domain in the interval 23 to 100 (LECFQCNRVN…CHDSPLCNKF (78 aa)). Cystine bridges form between Cys25-Cys52, Cys28-Cys37, Cys44-Cys70, Cys74-Cys90, and Cys91-Cys97. N-linked (GlcNAc...) asparagine glycosylation occurs at Asn60.

In terms of processing, glycosylated. Expressed in placenta, where it is detected in both fetal tissues (cotyledon and intercotyledon) and maternal tissues (caruncle and intercaruncular endometrium) (at protein level). Expressed in the mesenchyme area of villi in the cotyledon (at protein level). In endometrium, expressed in the luminal epithelium and weakly in the subluminal stroma (at protein level). Detected in trophoblast mononucleate cells (TMCs) (at protein level). Also detected in trophoblast binucleate cells (BNCs). Overall, expression is strongest in fetal tissue and lower in maternal tissue. Not detected in other tissues tested.

Its subcellular location is the secreted. In terms of biological role, binds specifically to type I collagen. In Bos taurus (Bovine), this protein is Secreted protein of Ly-6 domain 1.